The following is a 378-amino-acid chain: Ribosomal RNA large subunit methyltransferase G (378 aa).

The protein belongs to the methyltransferase superfamily. RlmG family.

The protein localises to the cytoplasm. It catalyses the reaction guanosine(1835) in 23S rRNA + S-adenosyl-L-methionine = N(2)-methylguanosine(1835) in 23S rRNA + S-adenosyl-L-homocysteine + H(+). Its function is as follows. Specifically methylates the guanine in position 1835 (m2G1835) of 23S rRNA. This chain is Ribosomal RNA large subunit methyltransferase G, found in Shigella flexneri serotype 5b (strain 8401).